Here is a 535-residue protein sequence, read N- to C-terminus: T-complex protein 1 subunit beta (535 aa).

A2 carries the post-translational modification N-acetylalanine. S3 is subject to Phosphoserine. K13 bears the N6-acetyllysine mark. G44 contacts ADP. G44 contributes to the ATP binding site. A Mg(2+)-binding site is contributed by D97. Residues G98, T99, T100, S101, S168, and S169 each contribute to the ADP site. Residues G98, T99, and T100 each contribute to the ATP site. At K181 the chain carries N6-acetyllysine. K248 participates in a covalent cross-link: Glycyl lysine isopeptide (Lys-Gly) (interchain with G-Cter in SUMO2). Position 260 is a phosphoserine (S260). T261 bears the Phosphothreonine mark. 3 residues coordinate ADP: G410, E495, and K500. Positions 495 and 500 each coordinate ATP.

It belongs to the TCP-1 chaperonin family. Component of the chaperonin-containing T-complex (TRiC), a hexadecamer composed of two identical back-to-back stacked rings enclosing a protein folding chamber. Each ring is made up of eight different subunits: TCP1/CCT1, CCT2, CCT3, CCT4, CCT5, CCT6A/CCT6, CCT7, CCT8. Interacts with PACRG. Interacts with FLCN. Interacts with DLEC1. Interacts with SVEP1. Post-translationally, the N-terminus is blocked.

It is found in the cytoplasm. The catalysed reaction is ATP + H2O = ADP + phosphate + H(+). Its function is as follows. Component of the chaperonin-containing T-complex (TRiC), a molecular chaperone complex that assists the folding of actin, tubulin and other proteins upon ATP hydrolysis. The TRiC complex mediates the folding of WRAP53/TCAB1, thereby regulating telomere maintenance. As part of the TRiC complex may play a role in the assembly of BBSome, a complex involved in ciliogenesis regulating transports vesicles to the cilia. In Mus musculus (Mouse), this protein is T-complex protein 1 subunit beta (Cct2).